Consider the following 486-residue polypeptide: GTPase Obg (486 aa).

Residues 2–159 (SRFIDRVVLH…RELVLELKSV (158 aa)) form the Obg domain. In terms of domain architecture, OBG-type G spans 160–340 (ADVGLVGFPS…LTFALAKLVA (181 aa)). GTP-binding positions include 166–173 (GFPSAGKS), 191–195 (FTTLV), 212–215 (DVPG), 292–295 (NKAD), and 321–323 (SAV). Mg(2+) is bound by residues Ser-173 and Thr-193. Positions 358–438 (PVISNENSFS…IGNVSFDWEP (81 aa)) constitute an OCT domain. The disordered stretch occupies residues 462-486 (RIGATERKHASRIRRGLEGLDPEDQ).

This sequence belongs to the TRAFAC class OBG-HflX-like GTPase superfamily. OBG GTPase family. In terms of assembly, monomer. Requires Mg(2+) as cofactor.

It is found in the cytoplasm. In terms of biological role, an essential GTPase which binds GTP, GDP and possibly (p)ppGpp with moderate affinity, with high nucleotide exchange rates and a fairly low GTP hydrolysis rate. Plays a role in control of the cell cycle, stress response, ribosome biogenesis and in those bacteria that undergo differentiation, in morphogenesis control. In Rhodococcus jostii (strain RHA1), this protein is GTPase Obg.